The following is an 89-amino-acid chain: MSRSIKKGPFVDKNLFKKIQAGDNKHQIKTYSRASTIIPEMIGFTINVHNGKTFVAVYIQENMIGHKLGEFAPTRKFISHAGAAKVGKK.

Belongs to the universal ribosomal protein uS19 family.

In terms of biological role, protein S19 forms a complex with S13 that binds strongly to the 16S ribosomal RNA. The chain is Small ribosomal subunit protein uS19 from Brachyspira hyodysenteriae (strain ATCC 49526 / WA1).